The sequence spans 125 residues: Large ribosomal subunit protein uL22c (125 aa).

It belongs to the universal ribosomal protein uL22 family. As to quaternary structure, part of the 50S ribosomal subunit.

The protein localises to the plastid. It localises to the chloroplast. This protein binds specifically to 23S rRNA. Functionally, the globular domain of the protein is located near the polypeptide exit tunnel on the outside of the subunit, while an extended beta-hairpin is found that lines the wall of the exit tunnel in the center of the 70S ribosome. In Nymphaea alba (White water-lily), this protein is Large ribosomal subunit protein uL22c (rpl22).